We begin with the raw amino-acid sequence, 91 residues long: Large ribosomal subunit protein eL34 (91 aa).

Residues 48-69 (RGRPVEMRKLPKTKKRPERPMP) are disordered.

Belongs to the eukaryotic ribosomal protein eL34 family.

This Pyrococcus horikoshii (strain ATCC 700860 / DSM 12428 / JCM 9974 / NBRC 100139 / OT-3) protein is Large ribosomal subunit protein eL34 (rpl34e).